Here is a 262-residue protein sequence, read N- to C-terminus: Iso-A82775C biosynthesis cluster protein B (262 aa).

Functionally, part of the gene cluster that mediates the biosynthesis of iso-A82775C, a enylepoxycyclohexane and biosynthetic precursor of the chloropestolide anticancer natural products. Within the cluster, the prenyltransferase iacE prenylates siccayne to generate pestalodiol E, using dimethylallyl diphosphate (DMAPP) as cosubstrate. The probable oxidoreductase iacF is then involved in the epoxidation of pestalodiol F to pestalodiol F, which is further converted to pestalofone A by the short-chain dehydrogenase/reductase iacG. Iso-A82775C is subsequently generated from pestalofone A by the short-chain dehydrogenase/reductase iacC. Iso-A82775C is further condensed with maldoxin via a Diels-Alder reaction to produce the anticancer natural products chloropestolides A to E. The sequence is that of Iso-A82775C biosynthesis cluster protein B from Pestalotiopsis fici (strain W106-1 / CGMCC3.15140).